The primary structure comprises 285 residues: Energy-coupling factor transporter ATP-binding protein EcfA2 (285 aa).

The region spanning 3–245 (IKIENLNHIY…VETLEKIGLA (243 aa)) is the ABC transporter domain. 40 to 47 (GHTGSGKS) is a binding site for ATP.

The protein belongs to the ABC transporter superfamily. Energy-coupling factor EcfA family. In terms of assembly, forms a stable energy-coupling factor (ECF) transporter complex composed of 2 membrane-embedded substrate-binding proteins (S component), 2 ATP-binding proteins (A component) and 2 transmembrane proteins (T component).

The protein resides in the cell membrane. In terms of biological role, ATP-binding (A) component of a common energy-coupling factor (ECF) ABC-transporter complex. Unlike classic ABC transporters this ECF transporter provides the energy necessary to transport a number of different substrates. The chain is Energy-coupling factor transporter ATP-binding protein EcfA2 from Clostridium perfringens (strain 13 / Type A).